The sequence spans 775 residues: 1,4-alpha-glucan branching enzyme GlgB (775 aa).

The tract at residues 1–39 (MTSVHDFATATRPATPSAAAQEPAPALPPGLDRNTLDAL) is disordered. Over residues 8–24 (ATATRPATPSAAAQEPA) the composition is skewed to low complexity. The active-site Nucleophile is D454. E507 (proton donor) is an active-site residue.

It belongs to the glycosyl hydrolase 13 family. GlgB subfamily. Monomer.

It carries out the reaction Transfers a segment of a (1-&gt;4)-alpha-D-glucan chain to a primary hydroxy group in a similar glucan chain.. It participates in glycan biosynthesis; glycogen biosynthesis. Its function is as follows. Catalyzes the formation of the alpha-1,6-glucosidic linkages in glycogen by scission of a 1,4-alpha-linked oligosaccharide from growing alpha-1,4-glucan chains and the subsequent attachment of the oligosaccharide to the alpha-1,6 position. This Ralstonia nicotianae (strain ATCC BAA-1114 / GMI1000) (Ralstonia solanacearum) protein is 1,4-alpha-glucan branching enzyme GlgB.